The sequence spans 251 residues: Adenosylcobinamide-GDP ribazoletransferase (251 aa).

The next 6 helical transmembrane spans lie at 29 to 49 (FAGM…ILAV), 65 to 85 (SLLI…DGAM), 110 to 130 (AFGA…LCYL), 136 to 156 (LLIL…IVRY), 175 to 195 (AIDL…IARF), and 198 to 218 (LTVA…TGAW).

It belongs to the CobS family. Mg(2+) is required as a cofactor.

The protein resides in the cell inner membrane. The enzyme catalyses alpha-ribazole + adenosylcob(III)inamide-GDP = adenosylcob(III)alamin + GMP + H(+). It catalyses the reaction alpha-ribazole 5'-phosphate + adenosylcob(III)inamide-GDP = adenosylcob(III)alamin 5'-phosphate + GMP + H(+). Its pathway is cofactor biosynthesis; adenosylcobalamin biosynthesis; adenosylcobalamin from cob(II)yrinate a,c-diamide: step 7/7. Functionally, joins adenosylcobinamide-GDP and alpha-ribazole to generate adenosylcobalamin (Ado-cobalamin). Also synthesizes adenosylcobalamin 5'-phosphate from adenosylcobinamide-GDP and alpha-ribazole 5'-phosphate. In Synechococcus elongatus (strain ATCC 33912 / PCC 7942 / FACHB-805) (Anacystis nidulans R2), this protein is Adenosylcobinamide-GDP ribazoletransferase.